A 302-amino-acid chain; its full sequence is Ribosomal RNA small subunit methyltransferase H (302 aa).

Residues 34–36, aspartate 53, phenylalanine 80, aspartate 101, and glutamine 108 each bind S-adenosyl-L-methionine; that span reads AGH. The disordered stretch occupies residues 283-302; that stretch reads LEENPRSKSAKMRVLKKIER. Over residues 290 to 302 the composition is skewed to basic residues; that stretch reads KSAKMRVLKKIER.

Belongs to the methyltransferase superfamily. RsmH family.

It is found in the cytoplasm. It carries out the reaction cytidine(1402) in 16S rRNA + S-adenosyl-L-methionine = N(4)-methylcytidine(1402) in 16S rRNA + S-adenosyl-L-homocysteine + H(+). In terms of biological role, specifically methylates the N4 position of cytidine in position 1402 (C1402) of 16S rRNA. This is Ribosomal RNA small subunit methyltransferase H from Mycoplasma mobile (strain ATCC 43663 / 163K / NCTC 11711) (Mesomycoplasma mobile).